The sequence spans 156 residues: Small ribosomal subunit protein uS17A (156 aa).

N-acetylserine is present on Ser2. Glycyl lysine isopeptide (Lys-Gly) (interchain with G-Cter in ubiquitin) cross-links involve residues Lys15, Lys46, Lys56, Lys57, Lys79, Lys96, Lys105, Lys133, Lys141, and Lys148.

This sequence belongs to the universal ribosomal protein uS17 family. Component of the small ribosomal subunit (SSU). Mature yeast ribosomes consist of a small (40S) and a large (60S) subunit. The 40S small subunit contains 1 molecule of ribosomal RNA (18S rRNA) and 33 different proteins (encoded by 57 genes). The large 60S subunit contains 3 rRNA molecules (25S, 5.8S and 5S rRNA) and 46 different proteins (encoded by 81 genes). N-terminally acetylated by acetyltransferase NatA.

The protein localises to the cytoplasm. Functionally, component of the ribosome, a large ribonucleoprotein complex responsible for the synthesis of proteins in the cell. The small ribosomal subunit (SSU) binds messenger RNAs (mRNAs) and translates the encoded message by selecting cognate aminoacyl-transfer RNA (tRNA) molecules. The large subunit (LSU) contains the ribosomal catalytic site termed the peptidyl transferase center (PTC), which catalyzes the formation of peptide bonds, thereby polymerizing the amino acids delivered by tRNAs into a polypeptide chain. The nascent polypeptides leave the ribosome through a tunnel in the LSU and interact with protein factors that function in enzymatic processing, targeting, and the membrane insertion of nascent chains at the exit of the ribosomal tunnel. The chain is Small ribosomal subunit protein uS17A from Saccharomyces cerevisiae (strain ATCC 204508 / S288c) (Baker's yeast).